The sequence spans 459 residues: Mitochondrial distribution and morphology protein 10 (459 aa).

Belongs to the MDM10 family. In terms of assembly, component of the ER-mitochondria encounter structure (ERMES) or MDM complex, composed of mmm1, mdm10, mdm12 and mdm34. Associates with the mitochondrial outer membrane sorting assembly machinery SAM(core) complex.

It localises to the mitochondrion outer membrane. Functionally, component of the ERMES/MDM complex, which serves as a molecular tether to connect the endoplasmic reticulum and mitochondria. Components of this complex are involved in the control of mitochondrial shape and protein biogenesis and may function in phospholipid exchange. mdm10 is involved in the late assembly steps of the general translocase of the mitochondrial outer membrane (TOM complex). Functions in the tom40-specific route of the assembly of outer membrane beta-barrel proteins, including the association of tom40 with the receptor tom22 and small TOM proteins. Can associate with the SAM(core) complex as well as the mdm12-mmm1 complex, both involved in late steps of the major beta-barrel assembly pathway, that is responsible for biogenesis of all outer membrane beta-barrel proteins. May act as a switch that shuttles between both complexes and channels precursor proteins into the tom40-specific pathway. Plays a role in mitochondrial morphology and in the inheritance of mitochondria. The polypeptide is Mitochondrial distribution and morphology protein 10 (mdmB) (Aspergillus terreus (strain NIH 2624 / FGSC A1156)).